A 77-amino-acid polypeptide reads, in one-letter code: Acyl carrier protein (77 aa).

The Carrier domain maps to 2–77 (SNIEERVKKI…AAIDYVTANQ (76 aa)). Serine 37 carries the O-(pantetheine 4'-phosphoryl)serine modification.

It belongs to the acyl carrier protein (ACP) family. Post-translationally, 4'-phosphopantetheine is transferred from CoA to a specific serine of apo-ACP by AcpS. This modification is essential for activity because fatty acids are bound in thioester linkage to the sulfhydryl of the prosthetic group.

It is found in the cytoplasm. The protein operates within lipid metabolism; fatty acid biosynthesis. Its function is as follows. Carrier of the growing fatty acid chain in fatty acid biosynthesis. This chain is Acyl carrier protein, found in Colwellia psychrerythraea (strain 34H / ATCC BAA-681) (Vibrio psychroerythus).